The following is a 337-amino-acid chain: Probable E3 ubiquitin-protein ligase LUL1 (337 aa).

Gly-2 is lipidated: N-myristoyl glycine. The DAR2 domain stretch occupies residues 139–255; that stretch reads FTFDASMPGR…GEIKIEVVKQ (117 aa). The segment at 285–324 adopts an RING-type; atypical zinc-finger fold; it reads CVVCLSEPRDTTVLPCRHMCMCSGCAKALRFQTNLCPVCR.

The protein belongs to the RING-type zinc finger family. LOG2 subfamily. In terms of processing, myristoylated (in vitro).

It catalyses the reaction S-ubiquitinyl-[E2 ubiquitin-conjugating enzyme]-L-cysteine + [acceptor protein]-L-lysine = [E2 ubiquitin-conjugating enzyme]-L-cysteine + N(6)-ubiquitinyl-[acceptor protein]-L-lysine.. Its pathway is protein modification; protein ubiquitination. In terms of biological role, acts as an E3 ubiquitin-protein ligase, or as part of E3 complex, which accepts ubiquitin from specific E2 ubiquitin-conjugating enzymes and then transfers it to substrates (in vitro). The chain is Probable E3 ubiquitin-protein ligase LUL1 (LUL1) from Arabidopsis thaliana (Mouse-ear cress).